The primary structure comprises 241 residues: Carboxy-S-adenosyl-L-methionine synthase (241 aa).

S-adenosyl-L-methionine-binding positions include Tyr-38, 63–65 (GCS), 88–89 (DN), 116–117 (DI), Asn-131, and Arg-198.

This sequence belongs to the class I-like SAM-binding methyltransferase superfamily. Cx-SAM synthase family. As to quaternary structure, homodimer.

It carries out the reaction prephenate + S-adenosyl-L-methionine = carboxy-S-adenosyl-L-methionine + 3-phenylpyruvate + H2O. Catalyzes the conversion of S-adenosyl-L-methionine (SAM) to carboxy-S-adenosyl-L-methionine (Cx-SAM). In Actinobacillus succinogenes (strain ATCC 55618 / DSM 22257 / CCUG 43843 / 130Z), this protein is Carboxy-S-adenosyl-L-methionine synthase.